Here is a 287-residue protein sequence, read N- to C-terminus: Phosphatidylserine decarboxylase proenzyme (287 aa).

Catalysis depends on charge relay system; for autoendoproteolytic cleavage activity residues D86, H143, and S250. S250 serves as the catalytic Schiff-base intermediate with substrate; via pyruvic acid; for decarboxylase activity. Pyruvic acid (Ser); by autocatalysis is present on S250.

This sequence belongs to the phosphatidylserine decarboxylase family. PSD-B subfamily. Prokaryotic type I sub-subfamily. In terms of assembly, heterodimer of a large membrane-associated beta subunit and a small pyruvoyl-containing alpha subunit. It depends on pyruvate as a cofactor. Is synthesized initially as an inactive proenzyme. Formation of the active enzyme involves a self-maturation process in which the active site pyruvoyl group is generated from an internal serine residue via an autocatalytic post-translational modification. Two non-identical subunits are generated from the proenzyme in this reaction, and the pyruvate is formed at the N-terminus of the alpha chain, which is derived from the carboxyl end of the proenzyme. The autoendoproteolytic cleavage occurs by a canonical serine protease mechanism, in which the side chain hydroxyl group of the serine supplies its oxygen atom to form the C-terminus of the beta chain, while the remainder of the serine residue undergoes an oxidative deamination to produce ammonia and the pyruvoyl prosthetic group on the alpha chain. During this reaction, the Ser that is part of the protease active site of the proenzyme becomes the pyruvoyl prosthetic group, which constitutes an essential element of the active site of the mature decarboxylase.

The protein resides in the cell membrane. The catalysed reaction is a 1,2-diacyl-sn-glycero-3-phospho-L-serine + H(+) = a 1,2-diacyl-sn-glycero-3-phosphoethanolamine + CO2. The protein operates within phospholipid metabolism; phosphatidylethanolamine biosynthesis; phosphatidylethanolamine from CDP-diacylglycerol: step 2/2. In terms of biological role, catalyzes the formation of phosphatidylethanolamine (PtdEtn) from phosphatidylserine (PtdSer). This is Phosphatidylserine decarboxylase proenzyme from Wigglesworthia glossinidia brevipalpis.